A 477-amino-acid chain; its full sequence is Adenylyl cyclase-associated protein 2 (477 aa).

Ala-2 bears the N-acetylalanine mark. 2 disordered regions span residues 224–262 (SILS…PSRS) and 274–324 (ITKG…HAPV). The segment covering 231–248 (GLPPPPPPPPPPGPPPPF) has biased composition (pro residues). Over residues 300–318 (RSPTKTRTPSPTSSKSNSP) the composition is skewed to low complexity. A phosphoserine mark is found at Ser-301 and Ser-309. Positions 318–455 (PQKHAPVLEL…QGDDYREFPI (138 aa)) constitute a C-CAP/cofactor C-like domain.

This sequence belongs to the CAP family. In terms of tissue distribution, found at relatively high levels in testes, at moderate levels in brain, heart and skeletal muscle, at lower levels in lung, skin, kidney and small intestine, and is undetectable in liver or spleen.

It localises to the cell membrane. Involved in the regulation of actin polymerization. The polypeptide is Adenylyl cyclase-associated protein 2 (Cap2) (Rattus norvegicus (Rat)).